Here is a 365-residue protein sequence, read N- to C-terminus: Peptidyl-prolyl cis-trans isomerase FKBP42 (365 aa).

Positions 1–15 (MDESLEHQTQTHDQE) are enriched in basic and acidic residues. The segment at 1–44 (MDESLEHQTQTHDQESEIVTEGSAVVHSEPSQEGNVPPKVDSEA) is disordered. The interaction with MDR1/PGP1 stretch occupies residues 1-163 (MDESLEHQTQ…EVIGFDETKE (163 aa)). Residues 67 to 159 (YSTCFLHYRA…LYEVEVIGFD (93 aa)) form the PPIase FKBP-type domain. Positions 163–337 (EGKARSDMTV…GKDEGGAKSK (175 aa)) are interaction with MRP1. 3 TPR repeats span residues 179-212 (ADRR…MGDD), 230-263 (NPCH…EEKN), and 264-297 (PKAL…APDD). Residues 310 to 326 (QEKALYQKQKEMYKGIF) are calmodulin-binding. The chain crosses the membrane as a helical; Anchor for type IV membrane protein span at residues 338–357 (SLFWLIVLWQWFVSLFSRIF).

Belongs to the FKBP-type PPIase family. Interacts with calmodulin (CaM), MRP1, MRP2, MDR1/PGP1, MDR11/PGP19 and SHD/HSP90. Interacts with 1-naphthylphthalamic acid (NPA).

It localises to the cell membrane. Its subcellular location is the vacuole membrane. The protein resides in the endoplasmic reticulum. The catalysed reaction is [protein]-peptidylproline (omega=180) = [protein]-peptidylproline (omega=0). PPIases accelerate the folding of proteins. It catalyzes the cis-trans isomerization of proline imidic peptide bonds in oligopeptides. Modulates the uptake of MRP substrates into the vacuole; reduces metolachlor-GS (MOC-GS) and enhances 17-beta-estradiol 17-(beta-D-glucuronide) (E(2)17betaG) uptake. Regulates cell elongation and orientation. Functions as a positive regulator of PGP1-mediated auxin transport. Confers drug modulation of PGP1 efflux activity as interaction with NPA or flavonol quercetin prevents its physical and functional interaction with PGP1. Required for the proper localization of auxin-related ABCB transporters. Plays a role in brassinosteroid (BR) signaling pathway. Required for seed development by promoting stamen elongation and, to a lesser extent, anther dehiscence and pollen maturation, probably as a chaperone helping ABCB1 and ABCB19 auxin transporters localization and activation. Involved in auxin signaling in nectaries to promote starch accumulation to attract visiting pollinators. This Arabidopsis thaliana (Mouse-ear cress) protein is Peptidyl-prolyl cis-trans isomerase FKBP42.